The sequence spans 160 residues: Transcription elongation factor GreA (160 aa).

Positions 50-70 form a coiled coil; sequence AAREQQSFNEGRIQELEAKLS.

The protein belongs to the GreA/GreB family.

Necessary for efficient RNA polymerase transcription elongation past template-encoded arresting sites. The arresting sites in DNA have the property of trapping a certain fraction of elongating RNA polymerases that pass through, resulting in locked ternary complexes. Cleavage of the nascent transcript by cleavage factors such as GreA or GreB allows the resumption of elongation from the new 3'terminus. GreA releases sequences of 2 to 3 nucleotides. This Legionella pneumophila (strain Paris) protein is Transcription elongation factor GreA.